The sequence spans 429 residues: L-dopachrome tautomerase yellow-f (429 aa).

An N-terminal signal peptide occupies residues 1-23 (MLSLDVLLLCAISGFQLLISADG). Residues asparagine 133 and asparagine 372 are each glycosylated (N-linked (GlcNAc...) asparagine).

It belongs to the major royal jelly protein family.

It localises to the secreted. The enzyme catalyses L-dopachrome = 5,6-dihydroxyindole-2-carboxylate. Its pathway is pigment biosynthesis; melanin biosynthesis. Its function is as follows. Tautomerization of L-dopachrome with decarboxylation to give 5,6-dihydroxyindole (DHI). Also catalyzes the tautomerization of the methyl ester of L-dopachrome and dopamine chrome. May play a role in melanization reactions during late pupal and adult stages. May play a role in melanization reactions during larval and early pupal stages. In Drosophila melanogaster (Fruit fly), this protein is L-dopachrome tautomerase yellow-f.